The sequence spans 107 residues: Heme-degrading monooxygenase (107 aa).

The region spanning I2–Y94 is the ABM domain. Position 6 (N6) interacts with Fe cation. Residue H76 coordinates heme.

This sequence belongs to the antibiotic biosynthesis monooxygenase family. Heme-degrading monooxygenase IsdG subfamily. Homodimer.

It is found in the cytoplasm. It carries out the reaction heme b + 3 reduced [NADPH--hemoprotein reductase] + 3 O2 = biliverdin IXalpha + CO + Fe(2+) + 3 oxidized [NADPH--hemoprotein reductase] + 3 H2O + H(+). Allows bacterial pathogens to use the host heme as an iron source. Catalyzes the oxidative degradation of the heme macrocyclic porphyrin ring to the biliverdin in the presence of a suitable electron donor such as ascorbate or NADPH--cytochrome P450 reductase, with subsequent release of free iron. This Bacillus cereus (strain ATCC 14579 / DSM 31 / CCUG 7414 / JCM 2152 / NBRC 15305 / NCIMB 9373 / NCTC 2599 / NRRL B-3711) protein is Heme-degrading monooxygenase.